The primary structure comprises 37 residues: Unknown protein 25 (37 aa).

This is Unknown protein 25 from Pseudotsuga menziesii (Douglas-fir).